Consider the following 160-residue polypeptide: MAEAAQQEQQNFAIQRIFLKDVSFEAPNSPNMFQKEWNPDVKLDLDTQSRELGEGVYEVILRLTVTVKNEEETAFLCEVQQGGIFTAGQMEEAQLAHCLGAFCPNILFPYARETISSLVVKGTFPQLNLAPANFDALFMNYLQNQASETAEAPAEAPAEA.

The protein belongs to the SecB family. Homotetramer, a dimer of dimers. One homotetramer interacts with 1 SecA dimer.

It localises to the cytoplasm. Its function is as follows. One of the proteins required for the normal export of preproteins out of the cell cytoplasm. It is a molecular chaperone that binds to a subset of precursor proteins, maintaining them in a translocation-competent state. It also specifically binds to its receptor SecA. The protein is Protein-export protein SecB of Aliivibrio salmonicida (strain LFI1238) (Vibrio salmonicida (strain LFI1238)).